The chain runs to 638 residues: ATP-dependent zinc metalloprotease FtsH (638 aa).

Topologically, residues 1 to 11 are cytoplasmic; it reads MSQKGKNKKWR. The chain crosses the membrane as a helical span at residues 12-32; the sequence is SAGLYALLAIVLISLATTFLG. The Lumenal portion of the chain corresponds to 33–114; the sequence is NRPPERLEIS…LAVRPVQEEG (82 aa). Residues 115 to 135 form a helical membrane-spanning segment; it reads LLGRILSTFFLPVLLLLGLFF. The Cytoplasmic segment spans residues 136–638; that stretch reads LLRRAQNGPG…TLPMAVNAGA (503 aa). ATP is bound at residue 209–216; that stretch reads GPPGTGKT. H431 provides a ligand contact to Zn(2+). E432 is a catalytic residue. Residues H435 and D510 each contribute to the Zn(2+) site.

The protein in the central section; belongs to the AAA ATPase family. In the C-terminal section; belongs to the peptidase M41 family. Homohexamer. Zn(2+) is required as a cofactor.

It is found in the cellular thylakoid membrane. Functionally, acts as a processive, ATP-dependent zinc metallopeptidase for both cytoplasmic and membrane proteins. Plays a role in the quality control of integral membrane proteins. In Synechococcus sp. (strain JA-2-3B'a(2-13)) (Cyanobacteria bacterium Yellowstone B-Prime), this protein is ATP-dependent zinc metalloprotease FtsH.